Consider the following 349-residue polypeptide: Anthranilate phosphoribosyltransferase (349 aa).

Residues G82, 85 to 86 (GD), 92 to 95 (NVST), 110 to 118 (KHGNRGVSS), and S122 contribute to the 5-phospho-alpha-D-ribose 1-diphosphate site. Residue G82 coordinates anthranilate. Position 94 (S94) interacts with Mg(2+). Residue N113 participates in anthranilate binding. R168 serves as a coordination point for anthranilate. Mg(2+) contacts are provided by D227 and E228.

It belongs to the anthranilate phosphoribosyltransferase family. Homodimer. Requires Mg(2+) as cofactor.

It carries out the reaction N-(5-phospho-beta-D-ribosyl)anthranilate + diphosphate = 5-phospho-alpha-D-ribose 1-diphosphate + anthranilate. Its pathway is amino-acid biosynthesis; L-tryptophan biosynthesis; L-tryptophan from chorismate: step 2/5. Its function is as follows. Catalyzes the transfer of the phosphoribosyl group of 5-phosphorylribose-1-pyrophosphate (PRPP) to anthranilate to yield N-(5'-phosphoribosyl)-anthranilate (PRA). The polypeptide is Anthranilate phosphoribosyltransferase (Acinetobacter baumannii (strain ATCC 17978 / DSM 105126 / CIP 53.77 / LMG 1025 / NCDC KC755 / 5377)).